A 709-amino-acid chain; its full sequence is Alpha-1,2-mannosyltransferase MNN24 (709 aa).

Residues 1-9 (MFSIPVSSK) are Cytoplasmic-facing. Residues 10 to 30 (TVRLILVSLLLITLINILAAF) traverse the membrane as a helical segment. Over 31 to 709 (QRSTLSSWFP…KNHIEFLEIS (679 aa)) the chain is Extracellular. Asparagine 317 carries an N-linked (GlcNAc...) asparagine glycan.

It belongs to the MNN1/MNT family.

It localises to the golgi apparatus membrane. Its pathway is protein modification; protein glycosylation. Functionally, alpha-1,2-mannosyltransferase required for cell wall integrity. Responsible for addition of the first alpha-1,2-linked mannose to form the branches on the mannan backbone of oligosaccharides. Addition of alpha-1,2-mannose is required for stabilization of the alpha-1,6-mannose backbone and hence regulates mannan fibril length; and is important for both immune recognition and virulence. This Candida albicans (strain SC5314 / ATCC MYA-2876) (Yeast) protein is Alpha-1,2-mannosyltransferase MNN24 (MNN24).